Here is a 291-residue protein sequence, read N- to C-terminus: 4-diphosphocytidyl-2-C-methyl-D-erythritol kinase (291 aa).

K11 is an active-site residue. Residue 95 to 105 (PVAAGLAGGSS) coordinates ATP. D137 is a catalytic residue.

This sequence belongs to the GHMP kinase family. IspE subfamily.

It catalyses the reaction 4-CDP-2-C-methyl-D-erythritol + ATP = 4-CDP-2-C-methyl-D-erythritol 2-phosphate + ADP + H(+). The protein operates within isoprenoid biosynthesis; isopentenyl diphosphate biosynthesis via DXP pathway; isopentenyl diphosphate from 1-deoxy-D-xylulose 5-phosphate: step 3/6. Catalyzes the phosphorylation of the position 2 hydroxy group of 4-diphosphocytidyl-2C-methyl-D-erythritol. In Alkaliphilus metalliredigens (strain QYMF), this protein is 4-diphosphocytidyl-2-C-methyl-D-erythritol kinase.